Consider the following 109-residue polypeptide: MDKSKRPFIKSKRSFRRRLPPIKSGDRIDYRNISLISRFLSEQGKILSKRVHRFTLKQQRLITLAIKQARILSLLPFTKRKGFERSESTPRTNALKPRNKNKQNNQTQF.

Positions 82-109 are disordered; sequence GFERSESTPRTNALKPRNKNKQNNQTQF.

This sequence belongs to the bacterial ribosomal protein bS18 family. Part of the 30S ribosomal subunit.

It localises to the plastid. In Cuscuta reflexa (Southern Asian dodder), this protein is Small ribosomal subunit protein bS18c.